Here is a 908-residue protein sequence, read N- to C-terminus: Chloride channel protein 2 (908 aa).

Residues 1 to 95 lie on the Cytoplasmic side of the membrane; the sequence is MAAATAAAAA…RCHKFLVSRV (95 aa). Residues 24 to 42 form an essential for channel gating by both voltage and cell volume region; that stretch reads QYEQTLMYGRYTQELGAFA. Position 28 is a phosphothreonine (Thr28). The tract at residues 44 to 57 is modulates channel gating by both voltage and cell volume; sequence EEAARIRLGGPEPW. The next 2 helical transmembrane spans lie at 96-129 and 138-163; these read GEDW…AQQW and ILLQ…TQIL. A Selectivity filter part_1 motif is present at residues 169 to 173; that stretch reads GSGIP. Ser170 is a binding site for chloride. The helical intramembrane region spans 172–179; that stretch reads IPEMKTIL. The next 2 membrane-spanning stretches (helical) occupy residues 188–206 and 213–231; these read LTLK…ALGS and EGPF…SKFL. A Selectivity filter part_2 motif is present at residues 211 to 215; the sequence is GKEGP. 2 intramembrane regions (helical) span residues 247–259 and 263–271; these read MLAA…VGCC and PIGGVLFSI. The next 5 membrane-spanning stretches (helical) occupy residues 283–303, 329–357, 366–385, 437–457, and 465–488; these read YWRG…LAVW, LPAF…VQVM, FLMR…ISTL, ANVF…SALA, and GAFM…MAAW. The short motif at 465–469 is the Selectivity filter part_3 element; sequence GAFMP. Position 467 (Phe467) interacts with chloride. The helical intramembrane region spans 505 to 519; that stretch reads GGYAVVGAAALAGAV. An intramembrane region (note=Loop between two helices) is located at residues 520 to 521; it reads TH. An intramembrane region (helical) is located at residues 522 to 533; sequence TVSTAVIVFELT. An intramembrane region (note=Loop between two helices) is located at residues 534–538; it reads GQIAH. The helical transmembrane segment at 539-556 threads the bilayer; that stretch reads ILPVMIAVILANAVAQSL. Residues 557-908 lie on the Cytoplasmic side of the membrane; the sequence is QPSLYDSIIR…TPSDSDDKCQ (352 aa). Chloride is bound at residue Tyr561. The 59-residue stretch at 592-650 folds into the CBS 1 domain; sequence MVRDVPHVALSCTFRDLRLALHRTKGRMLALVESPESMILLGSIERSQVVALLGAQLSP. Residues 653 to 662 show a composition bias toward basic residues; that stretch reads RRQHMQKLRK. Residues 653–722 are disordered; that stretch reads RRQHMQKLRK…NSTSLQEGTT (70 aa). The span at 666–680 shows a compositional bias: low complexity; the sequence is SPPSDQESPPSSETS. Polar residues predominate over residues 681-690; sequence IRFQVNTEDS. Basic residues predominate over residues 698-707; the sequence is QTHKPLKPAL. Residues 711–722 show a composition bias toward polar residues; that stretch reads PSNSTSLQEGTT. A Phosphoserine modification is found at Ser768. The 61-residue stretch at 800-860 folds into the CBS 2 domain; sequence IDPAPFQLVE…GSVTAQGVKV (61 aa). The Basolateral membrane sorting motif lies at 822–823; it reads LL. Residues 866 to 908 are disordered; the sequence is SFRDSATSSSDTETTEVHALWGPRSRHGLPREGTPSDSDDKCQ.

This sequence belongs to the chloride channel (TC 2.A.49) family. ClC-2/CLCN2 subfamily. In terms of assembly, homodimer. Interacts with auxiliary subunit HEPACAM. Phosphorylated. Activated by dephosphorylation. Expressed in the adrenal gland and brain. Expressed in intestinal epithelium (at protein level). Expressed in salivary gland (at protein level).

The protein resides in the cell membrane. It localises to the myelin membrane. Its subcellular location is the basolateral cell membrane. The protein localises to the cell projection. It is found in the dendritic spine membrane. The protein resides in the axon. It carries out the reaction chloride(in) = chloride(out). The catalysed reaction is thiocyanate(in) = thiocyanate(out). It catalyses the reaction bromide(in) = bromide(out). The enzyme catalyses nitrate(in) = nitrate(out). It carries out the reaction iodide(out) = iodide(in). Its activity is regulated as follows. Common gate kinetics are down-regulated by intracellular ATP. Inhibited by AK-42, a derivative of meclofenamate. Inhibited by Cd(2+). Inhibited by Zn(2+) and PKC activation. Inhibited at acidic pH. CCLN2:HEPACAM channel conductance is up-regulated upon hypo-osmolarity. In terms of biological role, voltage-gated and osmosensitive chloride channel. Forms a homodimeric channel where each subunit has its own ion conduction pathway. Conducts double-barreled currents controlled by two types of gates, two fast glutamate gates that control each subunit independently and a slow common gate that opens and shuts off both subunits simultaneously. Displays inward rectification currents activated upon membrane hyperpolarization and extracellular hypotonicity. Contributes to chloride conductance involved in neuron excitability. In hippocampal neurons, generates a significant part of resting membrane conductance and provides an additional chloride efflux pathway to prevent chloride accumulation in dendrites upon GABA receptor activation. In glia, associates with the auxiliary subunit HEPACAM/GlialCAM at astrocytic processes and myelinated fiber tracts where it may regulate transcellular chloride flux buffering extracellular chloride and potassium concentrations. Regulates aldosterone production in adrenal glands. The opening of CLCN2 channels at hyperpolarized membrane potentials in the glomerulosa causes cell membrane depolarization, activation of voltage-gated calcium channels and increased expression of aldosterone synthase, the rate-limiting enzyme for aldosterone biosynthesis. Contributes to chloride conductance in retinal pigment epithelium involved in phagocytosis of shed photoreceptor outer segments and photoreceptor renewal. Conducts chloride currents at the basolateral membrane of epithelial cells with a role in chloride reabsorption rather than secretion. Permeable to small monovalent anions with chloride &gt; thiocyanate &gt; bromide &gt; nitrate &gt; iodide ion selectivity. The polypeptide is Chloride channel protein 2 (Clcn2) (Mus musculus (Mouse)).